The primary structure comprises 390 residues: MLRFLNAGESHGPALTAIIEGYPSNVKITTDRINKELARRQKGYGRGGRMKIEKDTVEILSGVRFGITLGSPITLVVRNKDWENWTDIMAIEGDSTNKRQILEPRPGHADLTGGIKYGFYDLRNILERASARETTTRVAVGALCKILLEDIGIKIGSYVLSIGEKKIDKSEIESISYEDRFNNAENSELRLPILGKDEEFKEYIDKAKEDGESLGGIFEVYALNVPVGLGSYSQWDTRLDGKIAQAIMSIQAIKGVEIGEGFNLAYLPGSQAHDEIFYSKERGFYRKTNRAGGLEGGMTNGEPIIVRAAMKPIPTLMRHKSLQSVNVITKEPFDAAKERSDITAVPAAAVVAESMLAFVLAREILEKFGSDNWIQIKERIEKYRQDVLNY.

Residues R40 and R46 each contribute to the NADP(+) site. Residues 128-130 (RAS), 251-252 (QA), G296, 311-315 (KPIPT), and R339 each bind FMN.

Belongs to the chorismate synthase family. As to quaternary structure, homotetramer. FMNH2 is required as a cofactor.

It carries out the reaction 5-O-(1-carboxyvinyl)-3-phosphoshikimate = chorismate + phosphate. Its pathway is metabolic intermediate biosynthesis; chorismate biosynthesis; chorismate from D-erythrose 4-phosphate and phosphoenolpyruvate: step 7/7. Its function is as follows. Catalyzes the anti-1,4-elimination of the C-3 phosphate and the C-6 proR hydrogen from 5-enolpyruvylshikimate-3-phosphate (EPSP) to yield chorismate, which is the branch point compound that serves as the starting substrate for the three terminal pathways of aromatic amino acid biosynthesis. This reaction introduces a second double bond into the aromatic ring system. The protein is Chorismate synthase of Sulfurihydrogenibium sp. (strain YO3AOP1).